A 570-amino-acid chain; its full sequence is Urease subunit alpha (570 aa).

Positions 132–570 (GGIDTHVHFL…VPMARRYFLF (439 aa)) constitute a Urease domain. Residues H137, H139, and K220 each contribute to the Ni(2+) site. K220 is modified (N6-carboxylysine). H222 is a substrate binding site. Residues H249 and H275 each contribute to the Ni(2+) site. The Proton donor role is filled by H323. D363 contributes to the Ni(2+) binding site.

Belongs to the metallo-dependent hydrolases superfamily. Urease alpha subunit family. As to quaternary structure, heterotrimer of UreA (gamma), UreB (beta) and UreC (alpha) subunits. Three heterotrimers associate to form the active enzyme. Ni cation serves as cofactor. Post-translationally, carboxylation allows a single lysine to coordinate two nickel ions.

The protein resides in the cytoplasm. The enzyme catalyses urea + 2 H2O + H(+) = hydrogencarbonate + 2 NH4(+). It participates in nitrogen metabolism; urea degradation; CO(2) and NH(3) from urea (urease route): step 1/1. The sequence is that of Urease subunit alpha from Corynebacterium glutamicum (strain ATCC 13032 / DSM 20300 / JCM 1318 / BCRC 11384 / CCUG 27702 / LMG 3730 / NBRC 12168 / NCIMB 10025 / NRRL B-2784 / 534).